The sequence spans 357 residues: MSLTRLLIRDFRNIETADLALSPGFNFLVGANGSGKTSVLEAIYTLGHGRAFRSLQIGRVIRHEQEAFILHGRLQGEERETAIGLTKDKQGDSKVRIDGTDGHKVAELAHLMPMQLITPEGFTLLNGGPKYRRAFLDWGCFHNEPGFFTAWSNLKRLLKQRNAALRQVTRYEQLRPWDKELIPLAEQISTWRAEYSAGIAADMADTCKQFLPEFTLTFSFQRGWEKETEYAEVLERNFERDRQLTYTAHGPHKADLRIRADGAPVEDTLSRGQLKLLMCALRLAQGEFLTRESGRRCLYLIDDFASELDDERRGLLASRLKATQSQVFVSAISAEHVIDMSDENSKMFTVEKGKITD.

30 to 37 (GANGSGKT) provides a ligand contact to ATP.

It belongs to the RecF family.

It localises to the cytoplasm. Its function is as follows. The RecF protein is involved in DNA metabolism; it is required for DNA replication and normal SOS inducibility. RecF binds preferentially to single-stranded, linear DNA. It also seems to bind ATP. In Escherichia fergusonii (strain ATCC 35469 / DSM 13698 / CCUG 18766 / IAM 14443 / JCM 21226 / LMG 7866 / NBRC 102419 / NCTC 12128 / CDC 0568-73), this protein is DNA replication and repair protein RecF.